The primary structure comprises 456 residues: MIKRQKLKYKWMLITTLITFTTILLFCLIIIFFLKDTLRSSEIDEAERSSNDIANLFHSKSLSDISALDLNASLENFQEILIYDDKGRKLIQTSNDNTLAYDNKIDFKHPERIHIQRSHGINYLVITEPIRSKDFSGYSVLVHSLQNYDNLVKSLYIVALAFGLIATIITAGVSYIFSSQITKPIVTMSNKMNQIRRDGFQNKLELTTNYEETDNLIDTFNEMMYQIEESFNQQRQFVEDASHELRTPLQIIQGHLNLIQRWGKKDPAVLEESLNISIEEVNRITKLVEELLLLTKDRVNHNVLECENVDVNSEIQSRVKSLQHLHPDYTFETHLATKPIQLKINRHQFEQLLLIFIDNAMKYDTEHKHIKIVTQLKNKMIMIDITDHGMGIPKADLEFIFDRFYRVDKSRARSQGGNGLGLSIAEKIVQLNGGMIQVESELQKYTTFKISFPVLN.

Helical transmembrane passes span 13 to 33 (LITT…IIFF) and 157 to 177 (IVAL…SYIF). One can recognise an HAMP domain in the interval 179 to 232 (SQITKPIVTMSNKMNQIRRDGFQNKLELTTNYEETDNLIDTFNEMMYQIEESFN). Residues 240 to 456 (DASHELRTPL…TFKISFPVLN (217 aa)) form the Histidine kinase domain. His-243 carries the post-translational modification Phosphohistidine; by autocatalysis.

Post-translationally, autophosphorylated.

The protein resides in the cell membrane. It catalyses the reaction ATP + protein L-histidine = ADP + protein N-phospho-L-histidine.. Its function is as follows. Member of the two-component regulatory system ArlS/ArlR. ArlS probably functions as a sensor protein kinase which is autophosphorylated at a histidine residue and transfers its phosphate group to ArlR. The sequence is that of Signal transduction histidine-protein kinase ArlS (arlS) from Staphylococcus epidermidis (strain ATCC 12228 / FDA PCI 1200).